Consider the following 470-residue polypeptide: Pancreatic lipase-related protein 2 (470 aa).

The N-terminal stretch at 1–18 (MMLFVWTTGLLLLATARG) is a signal peptide. A disulfide bond links Cys22 and Cys28. The segment at 94–106 (IHGFIDNGEKDWL) is required for galactolipase activity. Cys110 and Cys121 form a disulfide bridge. The active-site Nucleophile is Ser172. The active-site Charge relay system is Asp196. Ca(2+)-binding residues include Glu207, Arg210, Asp212, and Asp215. A disulfide bridge links Cys257 with Cys281. Positions 258–280 (EKNIISTIVDVNGFLEGITSLAA) are required for galactolipase activity. His283 acts as the Charge relay system in catalysis. 2 disulfides stabilise this stretch: Cys305–Cys316 and Cys319–Cys324. N-linked (GlcNAc...) asparagine glycosylation is found at Asn354 and Asn429. Positions 358–470 (WRYKVSVTLS…EDVLQSLSPC (113 aa)) constitute a PLAT domain. A disulfide bridge links Cys454 with Cys470.

It belongs to the AB hydrolase superfamily. Lipase family. As to expression, pancreas.

The protein resides in the secreted. Its subcellular location is the zymogen granule membrane. It localises to the cell projection. It is found in the neuron projection. It carries out the reaction a triacylglycerol + H2O = a diacylglycerol + a fatty acid + H(+). The catalysed reaction is a 1,2-diacyl-3-O-(beta-D-galactosyl)-sn-glycerol + 2 H2O = 3-beta-D-galactosyl-sn-glycerol + 2 a fatty acid + 2 H(+). The enzyme catalyses 1,2,3-tri-(9Z-octadecenoyl)-glycerol + H2O = di-(9Z)-octadecenoylglycerol + (9Z)-octadecenoate + H(+). It catalyses the reaction di-(9Z)-octadecenoylglycerol + H2O = (9Z-octadecenoyl)-glycerol + (9Z)-octadecenoate + H(+). It carries out the reaction (9Z-octadecenoyl)-glycerol + H2O = glycerol + (9Z)-octadecenoate + H(+). The catalysed reaction is 1-(9Z-octadecenoyl)-glycerol + H2O = glycerol + (9Z)-octadecenoate + H(+). The enzyme catalyses 1,2,3-tripropanoylglycerol + H2O = dipropanoylglycerol + propanoate + H(+). It catalyses the reaction 1,2,3-tributanoylglycerol + H2O = dibutanoylglycerol + butanoate + H(+). It carries out the reaction 1,2,3-trioctanoylglycerol + H2O = dioctanoylglycerol + octanoate + H(+). The catalysed reaction is 1,2-didecanoylglycerol + H2O = decanoylglycerol + decanoate + H(+). The enzyme catalyses long chain 1,2-diacyl-3-O-beta-D-galactosyl-sn-glycerol + H2O = long chain acyl-3-O-beta-D-galactosyl-sn-glycerol + a fatty acid + H(+). It catalyses the reaction 1,2-dioctanoyl-3-O-beta-D-galactosyl-sn-glycerol + H2O = octanoyl-3-(beta-D-galactosyl)-sn-glycerol + octanoate + H(+). It carries out the reaction 1,2-didodecanoyl-3-beta-D-galactosyl-sn-glycerol + H2O = dodecanoyl-3-beta-D-galactosyl-sn-glycerol + dodecanoate + H(+). The catalysed reaction is 1-beta-D-galactosyl-2,3-didodecanoyl-sn-glycerol + H2O = 1-beta-D-galactosyl-dodecanoyl-sn-glycerol + dodecanoate + H(+). The enzyme catalyses a 1,2-diacyl-3-O-[alpha-D-galactosyl-(1-&gt;6)-beta-D-galactosyl]-sn-glycerol + H2O = acyl-3-O-[alpha-D-galactosyl-(1-&gt;6)-beta-D-galactosyl]-sn-glycerol + a fatty acid + H(+). It catalyses the reaction long chain 1,2-diacyl-3-O-[alpha-D-galactosyl-(1-&gt;6)-beta-D-galactosyl]-sn-glycerol + H2O = long chain acyl-3-O-[alpha-D-galactosyl-(1-&gt;6)-beta-D-galactosyl]-sn-glycerol + a fatty acid + H(+). It carries out the reaction 1,2-dioctanoyl-3-O-[alpha-D-galactosyl-(1-&gt;6)-beta-D-galactosyl]-sn-glycerol + H2O = octanoyl-3-O-[alpha-D-galactosyl-(1-&gt;6)-beta-D-galactosyl]-sn-glycerol + octanoate + H(+). The catalysed reaction is 1,2-didodecanoyl-3-O-[alpha-D-galactosyl-(1-&gt;6)-beta-D-galactosyl]-sn-glycerol + H2O = dodecanoyl-3-O-[alpha-D-galactosyl-(1-&gt;6)-beta-D-galactosyl]-sn-glycerol + dodecanoate + H(+). The enzyme catalyses a 1,2-diacyl-sn-glycero-3-phosphocholine + H2O = a monoacyl-sn-glycero-3-phosphocholine + a fatty acid + H(+). It participates in glycerolipid metabolism; triacylglycerol degradation. The protein operates within glycolipid metabolism. Triacylglycerol lipase activity is inhibited by increasing bile salts concentrations and not reactivated by CLPS. Functionally, lipase that primarily hydrolyzes triglycerides and galactosylglycerides. In neonates, may play a major role in pancreatic digestion of dietary fats such as milk fat globules enriched in long-chain triglycerides. Hydrolyzes short-, medium- and long-chain fatty acyls in triglycerides without apparent positional specificity. Can completely deacylate triacylglycerols. When the liver matures and bile salt synthesis increases, likely functions mainly as a galactolipase and monoacylglycerol lipase. Hydrolyzes monogalactosyldiglycerols (MGDG) and digalactosyldiacylglycerols (DGDG) present in a plant-based diet, releasing long-chain polyunsaturated fatty acids. Hydrolyzes medium- and long-chain fatty acyls in galactolipids. May act together with LIPF to hydrolyze partially digested triglycerides. Hydrolyzes long-chain monoglycerides with high efficiency. In cytotoxic T cells, contributes to perforin-dependent cell lysis, but is unlikely to mediate direct cytotoxicity. Also has low phospholipase activity. In neurons, required for the localization of the phospholipid 1-oleoyl-2-palmitoyl-PC (OPPC) to neurite tips through acyl chain remodeling of membrane phospholipids. The resulting OPPC-rich lipid membrane domain recruits the t-SNARE protein STX4 by selectively interacting with the STX4 transmembrane domain and this promotes surface expression of the dopamine transporter SLC6A3/DAT at neurite tips by facilitating fusion of SLC6A3-containing transport vesicles with the plasma membrane. This chain is Pancreatic lipase-related protein 2, found in Myocastor coypus (Coypu).